The primary structure comprises 598 residues: Probable translation initiation factor IF-2 (598 aa).

The tr-type G domain occupies 3–223 (LRCPIVSVLG…ISGLAQRFME (221 aa)). The tract at residues 12-19 (GHVDHGKT) is G1. 12–19 (GHVDHGKT) is a GTP binding site. A G2 region spans residues 37–41 (GITQH). The tract at residues 76–79 (DTPG) is G3. GTP-binding positions include 76 to 80 (DTPGH) and 130 to 133 (NKID). The G4 stretch occupies residues 130 to 133 (NKID). A G5 region spans residues 200 to 202 (SAM).

The protein belongs to the TRAFAC class translation factor GTPase superfamily. Classic translation factor GTPase family. IF-2 subfamily.

Functionally, function in general translation initiation by promoting the binding of the formylmethionine-tRNA to ribosomes. Seems to function along with eIF-2. In Methanococcus aeolicus (strain ATCC BAA-1280 / DSM 17508 / OCM 812 / Nankai-3), this protein is Probable translation initiation factor IF-2.